Reading from the N-terminus, the 1225-residue chain is DNA-directed RNA polymerase subunit beta' (1225 aa).

Residues cysteine 60, cysteine 62, cysteine 75, and cysteine 78 each coordinate Zn(2+). Positions 450, 452, and 454 each coordinate Mg(2+). Residues cysteine 818, cysteine 892, cysteine 899, and cysteine 902 each coordinate Zn(2+).

This sequence belongs to the RNA polymerase beta' chain family. The RNAP catalytic core consists of 2 alpha, 1 beta, 1 beta' and 1 omega subunit. When a sigma factor is associated with the core the holoenzyme is formed, which can initiate transcription. Mg(2+) serves as cofactor. The cofactor is Zn(2+).

It carries out the reaction RNA(n) + a ribonucleoside 5'-triphosphate = RNA(n+1) + diphosphate. In terms of biological role, DNA-dependent RNA polymerase catalyzes the transcription of DNA into RNA using the four ribonucleoside triphosphates as substrates. The chain is DNA-directed RNA polymerase subunit beta' from Streptococcus pneumoniae (strain P1031).